The chain runs to 256 residues: Myb family transcription factor MPH1 (256 aa).

An HTH myb-type domain is found at 14 to 74 (RSEVPRMRWT…HLQMYRSGSS (61 aa)). The segment at residues 45–70 (PKRILQLMGVKGVSISHIKSHLQMYR) is a DNA-binding region (H-T-H motif).

In terms of tissue distribution, highly expressed in the pulvinus and stem nodes. Expressed in the plumule of germinating seeds, coleoptile, leaves, internodes, leave sheaths, spikes and roots.

The protein localises to the nucleus. In terms of biological role, probable transcription factor involved in the regulation of plant height by elongating internode cell length. Involved in the positive regulation of grain yield. May be involved in the regulation of genes related to cell elongation and cell wall synthesis, which are associated with plant height and yield phenotypes. Plays a role in tolerance to cadmium stress. The polypeptide is Myb family transcription factor MPH1 (Oryza sativa subsp. japonica (Rice)).